Reading from the N-terminus, the 434-residue chain is Trehalose-phosphatase (434 aa).

Residues aspartate 156 and aspartate 158 each coordinate Mg(2+). Catalysis depends on aspartate 158, which acts as the Proton donor/acceptor. 275–277 is a binding site for substrate; the sequence is QKK. Aspartate 366 serves as a coordination point for Mg(2+).

It belongs to the gob-1 trehalose phosphatase family. Mg(2+) is required as a cofactor.

It carries out the reaction alpha,alpha-trehalose 6-phosphate + H2O = alpha,alpha-trehalose + phosphate. Its function is as follows. Catalyzes the hydrolysis of trehalose 6-phosphate to trehalose and phosphate; prevents the accumulation of toxic levels of trehalose 6-phosphate. The protein is Trehalose-phosphatase (gob-1) of Caenorhabditis briggsae.